The primary structure comprises 443 residues: Threonine/serine transporter TdcC (443 aa).

11 consecutive transmembrane segments (helical) span residues 22–42 (TTWT…FFPI), 44–64 (AGFG…PIAF), 97–117 (GVVI…IYGV), 140–160 (FVAL…KDLM), 163–183 (VMSY…LSLI), 207–227 (ILIT…FSPI), 261–281 (MLMV…LSPA), 312–332 (AITL…KSFF), 366–386 (ISMI…PNIL), 389–409 (IEAM…MYAI), and 423–443 (DNVF…YKLF).

This sequence belongs to the amino acid/polyamine transporter 2 family. SdaC/TdcC subfamily.

The protein localises to the cell inner membrane. The enzyme catalyses L-threonine(in) + H(+)(in) = L-threonine(out) + H(+)(out). The catalysed reaction is L-serine(in) + H(+)(in) = L-serine(out) + H(+)(out). Functionally, involved in the import of threonine and serine into the cell, with the concomitant import of a proton (symport system). The protein is Threonine/serine transporter TdcC of Escherichia coli O45:K1 (strain S88 / ExPEC).